A 413-amino-acid chain; its full sequence is Isobutyryl-CoA dehydrogenase, mitochondrial (413 aa).

A mitochondrion-targeting transit peptide spans Met1–Ser20. The residue at position 48 (Lys48) is an N6-acetyllysine; alternate. The residue at position 48 (Lys48) is an N6-succinyllysine; alternate. Residues Tyr156–Ser165 and Phe189–Ser191 each bind FAD. Ser165 contacts substrate. An N6-succinyllysine modification is found at Lys211. Residue Lys229 is modified to N6-acetyllysine. Lys269 carries the N6-succinyllysine modification. Residue Asn272–Arg275 participates in substrate binding. FAD contacts are provided by residues Arg300, Ser310 to Gln311, and Gln369 to Gly373. Residue Glu396 is the Proton acceptor of the active site. An FAD-binding site is contributed by Ser398–Glu400. Arg408 contributes to the substrate binding site.

Belongs to the acyl-CoA dehydrogenase family. As to quaternary structure, homotetramer, formed by a dimer of dimers. It depends on FAD as a cofactor.

Its subcellular location is the mitochondrion. It catalyses the reaction 2-methylpropanoyl-CoA + oxidized [electron-transfer flavoprotein] + H(+) = 2-methylpropenoyl-CoA + reduced [electron-transfer flavoprotein]. It carries out the reaction (2S)-2-methylbutanoyl-CoA + oxidized [electron-transfer flavoprotein] + H(+) = (2E)-2-methylbut-2-enoyl-CoA + reduced [electron-transfer flavoprotein]. The catalysed reaction is propanoyl-CoA + oxidized [electron-transfer flavoprotein] + H(+) = acryloyl-CoA + reduced [electron-transfer flavoprotein]. It functions in the pathway amino-acid degradation; L-valine degradation. Functionally, isobutyryl-CoA dehydrogenase which catalyzes the conversion of 2-methylpropanoyl-CoA to (2E)-2-methylpropenoyl-CoA in the valine catabolic pathway. To a lesser extent, also able to catalyze the oxidation of (2S)-2-methylbutanoyl-CoA. This Mus musculus (Mouse) protein is Isobutyryl-CoA dehydrogenase, mitochondrial.